Reading from the N-terminus, the 294-residue chain is N-acetylmuramic acid 6-phosphate etherase (294 aa).

The 164-residue stretch at 54 to 217 folds into the SIS domain; it reads VIKSFEEEGR…STASMIGVGK (164 aa). Glu-82 serves as the catalytic Proton donor. Residue Glu-113 is part of the active site.

Belongs to the GCKR-like family. MurNAc-6-P etherase subfamily. Homodimer.

The catalysed reaction is N-acetyl-D-muramate 6-phosphate + H2O = N-acetyl-D-glucosamine 6-phosphate + (R)-lactate. It participates in amino-sugar metabolism; N-acetylmuramate degradation. Its function is as follows. Specifically catalyzes the cleavage of the D-lactyl ether substituent of MurNAc 6-phosphate, producing GlcNAc 6-phosphate and D-lactate. This is N-acetylmuramic acid 6-phosphate etherase from Bacillus cereus (strain AH187).